The following is a 340-amino-acid chain: UDP-3-O-(3-hydroxymyristoyl)glucosamine N-acyltransferase (340 aa).

Histidine 239 functions as the Proton acceptor in the catalytic mechanism.

Belongs to the transferase hexapeptide repeat family. LpxD subfamily. As to quaternary structure, homotrimer.

The catalysed reaction is a UDP-3-O-[(3R)-3-hydroxyacyl]-alpha-D-glucosamine + a (3R)-hydroxyacyl-[ACP] = a UDP-2-N,3-O-bis[(3R)-3-hydroxyacyl]-alpha-D-glucosamine + holo-[ACP] + H(+). It catalyses the reaction UDP-3-O-[(3R)-3-hydroxytetradecanoyl]-alpha-D-glucosamine + (3R)-hydroxytetradecanoyl-[ACP] = UDP-2-N,3-O-bis[(3R)-3-hydroxytetradecanoyl]-alpha-D-glucosamine + holo-[ACP] + H(+). It functions in the pathway glycolipid biosynthesis; lipid IV(A) biosynthesis; lipid IV(A) from (3R)-3-hydroxytetradecanoyl-[acyl-carrier-protein] and UDP-N-acetyl-alpha-D-glucosamine: step 3/6. In terms of biological role, catalyzes the N-acylation of UDP-3-O-(hydroxytetradecanoyl)glucosamine using 3-hydroxytetradecanoyl-ACP as the acyl donor. Is involved in the biosynthesis of lipid A, a phosphorylated glycolipid that anchors the lipopolysaccharide to the outer membrane of the cell. This chain is UDP-3-O-(3-hydroxymyristoyl)glucosamine N-acyltransferase, found in Yersinia pestis bv. Antiqua (strain Antiqua).